A 34-amino-acid polypeptide reads, in one-letter code: Photosystem I reaction center subunit XII (34 aa).

Residues 5–25 form a helical membrane-spanning segment; sequence ISSPEIFIALVVAAHAAILAL.

This sequence belongs to the PsaM family.

It is found in the cellular thylakoid membrane. In Synechococcus sp. (strain CC9902), this protein is Photosystem I reaction center subunit XII.